The chain runs to 155 residues: DNA gyrase inhibitor (155 aa).

Belongs to the DNA gyrase inhibitor family. As to quaternary structure, interacts with DNA gyrase.

The protein resides in the cytoplasm. Inhibits the supercoiling activity of DNA gyrase. Acts by inhibiting DNA gyrase at an early step, prior to (or at the step of) binding of DNA by the gyrase. It protects cells against toxins that target DNA gyrase, by inhibiting activity of these toxins and reducing the formation of lethal double-strand breaks in the cell. This is DNA gyrase inhibitor from Salmonella arizonae (strain ATCC BAA-731 / CDC346-86 / RSK2980).